The chain runs to 142 residues: Glycine-rich RNA-binding protein 1 (142 aa).

Residues 1 to 65 (NSLHSAFSTY…RNITVNEAQS (65 aa)) enclose the RRM domain. A disordered region spans residues 48 to 101 (MNGKELDGRNITVNEAQSRGGRGGGGGGGYGGGRGGGGGYGRRDGGGGGYGGGG). The segment covering 67–101 (GGRGGGGGGGYGGGRGGGGGYGRRDGGGGGYGGGG) has biased composition (gly residues).

Functionally, possibly has a role in RNA transcription or processing during stress. In Sorghum bicolor (Sorghum), this protein is Glycine-rich RNA-binding protein 1 (GRP1).